Here is a 798-residue protein sequence, read N- to C-terminus: MEAGEGKERVPKQRQVLIFFVLLGIAQASCQPRHYSVAEETESGSFVANLLKDLGLEIGELAVRGARVVSKGKKMHLQFDRQTGDLLLNEKLDREELCGPTEPCVLPFQVLLENPLQFFQAELRIRDVNDHSPVFLDKEILLKIPESITPGTTFLIERAQDLDVGTNSLQNYTISPNFHFHLNLQDSLDGIILPQLVLNRALDREEQPEIRLTLTALDGGSPPRSGTALVRIEVVDINDNVPEFAKLLYEVQIPEDSPVGSQVAIVSARDLDIGTNGEISYAFSQASEDIRKTFRLSAKSGELLLRQKLDFESIQTYTVNIQATDGGGLSGTCVVFVQVMDLNDNPPELTMSTLINQIPENLQDTLIAVFSVSDPDSGDNGRMVCSIQDDLPFFLKPSVENFYTLVISTALDRETRSEYNITITVTDFGTPRLKTEHNITVLVSDVNDNAPAFTQTSYTLFVRENNSPALHIGSVSATDRDSGTNAQVTYSLLPPQDPHLPLASLVSINADNGHLFALQSLDYEALQAFEFRVGAADRGSPALSSEALVRVLVLDANDNSPFVLYPLQNGSAPCTELVPRAAEPGYLVTKVVAVDGDSGQNAWLSYQLLKATEPGLFGVWAHNGEVRTARLLRERDAAKQRLVVLVKDNGEPPRSATATLHVLLVDGFSQPYLLLPEAAPAQAQADLLTVYLVVALASVSSLFLFSVLLFVAVRLCRRSRAASVGRCSVPEGPFPGQMVDVSGTGTLSQSYQYEVCLTGGSGTNEFKFLKPIIPNFVAQGAERVSEANPSFRKSFEFT.

The first 30 residues, 1–30 (MEAGEGKERVPKQRQVLIFFVLLGIAQASC), serve as a signal peptide directing secretion. Topologically, residues 31-692 (QPRHYSVAEE…AQADLLTVYL (662 aa)) are extracellular. Cadherin domains are found at residues 37–135 (VAEE…SPVF), 136–244 (LDKE…VPEF), 249–349 (YEVQ…PPEL), 354–453 (LINQ…APAF), and 458–563 (YTLF…SPFV). An N-linked (GlcNAc...) asparagine glycan is attached at Asn171. N6-acetyllysine is present on Lys299. Asn420 and Asn438 each carry an N-linked (GlcNAc...) asparagine glycan. Residue Asn569 is glycosylated (N-linked (GlcNAc...) asparagine). The region spanning 570 to 673 (GSAPCTELVP…LVDGFSQPYL (104 aa)) is the Cadherin 6 domain. Residues 693–713 (VVALASVSSLFLFSVLLFVAV) traverse the membrane as a helical segment. The Cytoplasmic segment spans residues 714–798 (RLCRRSRAAS…PSFRKSFEFT (85 aa)).

Its subcellular location is the cell membrane. Functionally, potential calcium-dependent cell-adhesion protein. May be involved in the establishment and maintenance of specific neuronal connections in the brain. The chain is Protocadherin beta-2 (PCDHB2) from Homo sapiens (Human).